A 585-amino-acid polypeptide reads, in one-letter code: Serine/threonine-protein kinase Nek3 (585 aa).

Residues 4-258 (YEVLEQIGKG…AAELLKHPHL (255 aa)) form the Protein kinase domain. Residues 10–18 (IGKGSFGSA) and K33 contribute to the ATP site. The active-site Proton acceptor is the D129. Disordered regions lie at residues 354–413 (GNHS…TPVN) and 489–511 (DSSK…SNPL). 2 stretches are compositionally biased toward polar residues: residues 400-413 (RASQ…TPVN) and 498-511 (SSDP…SNPL).

It belongs to the protein kinase superfamily. NEK Ser/Thr protein kinase family. NIMA subfamily. Interacts with PLIM2B. Expressed in pollen grains.

The catalysed reaction is L-seryl-[protein] + ATP = O-phospho-L-seryl-[protein] + ADP + H(+). It catalyses the reaction L-threonyl-[protein] + ATP = O-phospho-L-threonyl-[protein] + ADP + H(+). Functionally, may be involved in plant development processes. May function downstream of DCW11 in retrograde signaling from the mitochondria to the nucleus. Seems to be involved in the mechanism of cytoplasmic male sterility (CMS) occurrence. In Oryza sativa subsp. japonica (Rice), this protein is Serine/threonine-protein kinase Nek3.